The primary structure comprises 687 residues: Protein FAR1-RELATED SEQUENCE 1 (687 aa).

The FAR1 domain maps to 35 to 137; sequence EFYKEYANSV…VKEHNHEIFT (103 aa). Residues 211–254 form the MULE domain; sequence KAMHGCRPRVILTKHDQMLKEAVLEVFPSSRHCFYMWDTLGQMP. The SWIM-type zinc finger occupies 440-476; it reads FVVVWNSESSEVVCSCRLFELKGFLCRHAMIVLQMSG. Residues 540 to 562 are a coiled coil; sequence NVLNEALRKWENKSNLIQNLEES.

This sequence belongs to the FHY3/FAR1 family. Expressed in rosette and cauline leaves, inflorescences stems, flowers and siliques.

The protein localises to the nucleus. In terms of biological role, putative transcription activator involved in regulating light control of development. The protein is Protein FAR1-RELATED SEQUENCE 1 (FRS1) of Arabidopsis thaliana (Mouse-ear cress).